The primary structure comprises 217 residues: Non-structural protein NS3 (217 aa).

This sequence belongs to the orbivirus NS3 family.

In terms of biological role, may play a role in the release of virions from infected cells. This Camelus dromedarius (Dromedary) protein is Non-structural protein NS3 (Segment-10).